Reading from the N-terminus, the 273-residue chain is 3-methyl-2-oxobutanoate hydroxymethyltransferase (273 aa).

Mg(2+) is bound by residues D53 and D92. Residues 53-54 (DS), D92, and K120 contribute to the 3-methyl-2-oxobutanoate site. E122 contacts Mg(2+). The active-site Proton acceptor is E189.

The protein belongs to the PanB family. Homodecamer; pentamer of dimers. It depends on Mg(2+) as a cofactor.

It localises to the cytoplasm. It catalyses the reaction 3-methyl-2-oxobutanoate + (6R)-5,10-methylene-5,6,7,8-tetrahydrofolate + H2O = 2-dehydropantoate + (6S)-5,6,7,8-tetrahydrofolate. Its pathway is cofactor biosynthesis; (R)-pantothenate biosynthesis; (R)-pantoate from 3-methyl-2-oxobutanoate: step 1/2. Catalyzes the reversible reaction in which hydroxymethyl group from 5,10-methylenetetrahydrofolate is transferred onto alpha-ketoisovalerate to form ketopantoate. This Cupriavidus necator (strain ATCC 17699 / DSM 428 / KCTC 22496 / NCIMB 10442 / H16 / Stanier 337) (Ralstonia eutropha) protein is 3-methyl-2-oxobutanoate hydroxymethyltransferase.